A 1489-amino-acid chain; its full sequence is FERM domain-containing protein C (1489 aa).

Polar residues-rich tracts occupy residues 59-79 (DTESNYGGGANSITNTPNFNS) and 103-118 (NSPLHKSATRPISTSI). 4 disordered regions span residues 59–86 (DTESNYGGGANSITNTPNFNSHRGHQHL), 103–197 (NSPL…PSTL), 252–271 (NSVQNDIVDSDNNNNNNNNN), and 277–312 (EQQQEKQQQQQQHHHHHSTPNKPPKSRSVSISTPDS). Residues 131–153 (SSSSSSSDGDSNSSSDSSDNSSE) are compositionally biased toward low complexity. A compositionally biased stretch (basic residues) spans 163 to 172 (HLHLHRHHRK). The segment covering 181-195 (FESSSESSEQYGSPS) has biased composition (low complexity). A coiled-coil region spans residues 202 to 289 (ALKLEKIMQI…QEKQQQQQQH (88 aa)). Residues 277–287 (EQQQEKQQQQQ) show a composition bias toward low complexity. Residues 303–312 (RSVSISTPDS) are compositionally biased toward polar residues. The stretch at 356–383 (IKVSKVLEEEMQLQQEFEKQEQLRHSAR) forms a coiled coil. 3 disordered regions span residues 396-435 (NLQDQQDQQLRKNENSNNNEGDDNNENVSNDNSSDNENQN), 459-479 (VITPPPPAQEPQHQQQPKILT), and 508-569 (EDPL…TTTT). A compositionally biased stretch (low complexity) spans 421–435 (ENVSNDNSSDNENQN). Over residues 545 to 555 (TASSSSSPTLQ) the composition is skewed to polar residues. Positions 556–569 (ATKTTTTTTTTTTT) are enriched in low complexity. Residues 637 to 934 (ILVHISLVDQ…GYKYFIQHDE (298 aa)) enclose the FERM domain. 13 LRR repeats span residues 1017–1040 (KVELPSLNLRGSDLSFIADALKDT), 1053–1075 (ENLNILSLDLSNNPLLATDAFEP), 1087–1110 (HLNLKNIGLSNKGVMPLVTIIEKY), 1111–1133 (PNIETLQIGKNRVNESGVRVILR), 1167–1191 (NKTIKNLNISKNLITEEGFHHIFEG), 1196–1219 (SLSLQDLNISGNKINSKLMIKFIK), 1254–1278 (SCHIKSLDTSYNDLGTSGTKNVIKG), 1282–1306 (NQTITELSLCANKISSSGCNDLCQS), 1339–1362 (NKTITTLDLSMNEFSKSSSSAIGT), 1367–1391 (NETLQEFYLADSSLGAREVESILNG), 1395–1418 (NSTIKKIFLDTNPIGKKGISSLAN), 1428–1450 (VITLRHTNLNGKDILELLKQLST), and 1451–1474 (NIPIKIINLTENTLDKITPQIKNA).

The sequence is that of FERM domain-containing protein C (frmC) from Dictyostelium discoideum (Social amoeba).